A 201-amino-acid polypeptide reads, in one-letter code: Ras-related protein Rab-10 (201 aa).

16–23 (GDSGVGKT) is a binding site for GTP. Residues 38 to 46 (FISTIGIDF) carry the Effector region motif. GTP contacts are provided by residues 64-68 (DTAGQ), 122-125 (NKCD), and 152-154 (SAK). A disordered region spans residues 175–201 (PDSTDEQSRDTVNPVQPQRQSSSGGCC). Residues 184–201 (DTVNPVQPQRQSSSGGCC) show a composition bias toward polar residues. 2 S-geranylgeranyl cysteine lipidation sites follow: Cys200 and Cys201.

This sequence belongs to the small GTPase superfamily. Rab family. Interacts (GTP-bound form) with ehbp-1 (via C-terminal coiled coil). Interacts (GTP-bound form) with cnt-1 (via C-terminal ankyrin repeat). Interacts (GTP-bound form) with rab-5 GAP, tbc-2 (via putative coiled coil domain). Interacts (GTP-bound form) with amph-1. In terms of tissue distribution, almost ubiquitously expressed. Expressed in intestine, hypodermis, seam cells, body-wall muscles, many neurons, oviduct sheath cell, spermatheca, coelomocytes and pharyngeal and nerve ring.

The protein localises to the early endosome membrane. It is found in the late endosome membrane. The protein resides in the golgi apparatus membrane. It localises to the endosome membrane. It carries out the reaction GTP + H2O = GDP + phosphate + H(+). Its activity is regulated as follows. Rab activation is generally mediated by a guanine exchange factor (GEF), while inactivation through hydrolysis of bound GTP is catalyzed by a GTPase activating protein (GAP). Tbc-4 is a likely GAP of this rab. Denn-4 is a putative GEF of this rab. Its function is as follows. The small GTPases Rab are key regulators of intracellular membrane trafficking, from the formation of transport vesicles to their fusion with membranes. Rabs cycle between an inactive GDP-bound form and an active GTP-bound form that is able to recruit to membranes different set of downstream effectors directly responsible for vesicle formation, movement, tethering and fusion. Required for basolateral endocytic recycling, the return of macromolecules and fluid from endosomes to the plasma membrane, in polarized epithelial cells of the intestine upstream of rme-1. Involved in the formation of the endosomal tubular network that is required for basolateral recycling of clathrin-independent endocytic cargo such as daf-4 in the intestine. Required for the recruitment of cnt-1 effector to endosomal membranes in the intestinal epithelium, which is important for the regulation of levels of endosomal phosphatidylinositol-4,5-bisphosphate, a key phosphoinositide in membrane traffic, and for the recruitment of endosomal membrane-bending proteins, rme-1 and sdpn-1. Recruits the rab-5 GTPase-activating protein tbc-2 to endosomes where it then inactivates rab-5 resulting in removal of rab-5 from membranes, which is necessary for cargo transport from early endosomes to recycling endosomes in the basolateral intestine. Regulates recycling of synaptic membrane AMPA glutamate receptor, glr-1, from intracellular endosomal compartments back to synapses in a cholesterol-dependent endocytosis pathway functioning after clathrin-independent endocytosis in command interneurons. Regulates neuropeptide release from dense core vesicles (DCVs) of cholinergic motoneurons in cooperation with rab-5. They reciprocally recruit each other's inactivating GAP molecule leading to local exclusion of one or the other rab protein at the Golgi-endosomal interphase at an essential stage during DCV sorting. Regulates membrane trafficking of membranes and dendrite proteins from the Golgi and/or endosomal compartments to plasma membrane during dendrite morphogenesis together with the exocyst complex in the multi-dendritic PVD sensory neurons acting in a cell-autonomous manner and requiring its GTPase activity. Functions cell-autonomously together with the exocyst complex to regulate dendrite morphogenesis and anterior-posterior patterning of the PVD neurons dendritic arbor by balancing the anterograde and retrograde transport via molecular motors unc-116 (kinesin heavy chain) and dhc-1 (dynein heavy chain) to appropriately transport branching factors, such as dma-1, to the specific subcellular regions of the developing dendrite in its GTPase activity-dependent manner. In Caenorhabditis elegans, this protein is Ras-related protein Rab-10.